Here is a 293-residue protein sequence, read N- to C-terminus: MGPNAVELTTDQAWCLADVLGAGSYPWVLAITPPYSDHSQRSAFLAAQSAELTRMGVVNSAGAVDPRVAQWITTVCRATQWLDLRFVSGPGDLLRGMVARRSEETVVALRNAQLVTFTAMDIGHQHALVPVLTAGLSGRKPARFDDFALPAAAGARADEQIRNGAPLAEVLEFLGVPPSARPLVESVFDGRRTYVEIVAGEHRDGHRVTTEVGVSIIDTPHGRILVHPTKAFDGEWISTFTPGSADAIAMAVERLTASLPSGSWFPDQPLTRDFDEDAATHREPVLQRRTQKA.

Belongs to the EspG family.

The protein resides in the cytoplasm. In Mycolicibacterium smegmatis (strain ATCC 700084 / mc(2)155) (Mycobacterium smegmatis), this protein is ESX-3 secretion-associated protein EspG3.